We begin with the raw amino-acid sequence, 229 residues long: 3-dehydroquinate dehydratase (229 aa).

Residues Glu-33–Arg-35 and Arg-65 each bind 3-dehydroquinate. His-121 (proton donor/acceptor) is an active-site residue. Lys-146 functions as the Schiff-base intermediate with substrate in the catalytic mechanism. Positions 188, 207, and 211 each coordinate 3-dehydroquinate.

Belongs to the type-I 3-dehydroquinase family. Homodimer.

It carries out the reaction 3-dehydroquinate = 3-dehydroshikimate + H2O. The protein operates within metabolic intermediate biosynthesis; chorismate biosynthesis; chorismate from D-erythrose 4-phosphate and phosphoenolpyruvate: step 3/7. Functionally, involved in the third step of the chorismate pathway, which leads to the biosynthesis of aromatic amino acids. Catalyzes the cis-dehydration of 3-dehydroquinate (DHQ) and introduces the first double bond of the aromatic ring to yield 3-dehydroshikimate. The sequence is that of 3-dehydroquinate dehydratase from Lactococcus lactis subsp. cremoris (strain MG1363).